The primary structure comprises 356 residues: MLGKTVLLPLLVLLCHSLASASLVYRGADISSLLIEEKAGIEYKNVNGQTQPLENILKANGVNSVRQRVWVNPSDGSYNLDYNVKLAKRVKAAGMSVYLDLHFSDTWADPSHQTTPRGWSTNDIGTLTWQVYNYTMEVCNTFASNGIDVSIVAIGNEIRNGLLWPLGKPDNYANIANILHSAAFGVKDSTLSPKPKIMIHLDNGWDWSAQKFFYDRVLSSGANLVKSDFDLIGVSYYPFYNPSATLSALTTSLKNLRSTYGKDVLVVETDWPVLCPNPAYAFPSDLKDIPFSVAGQTTFVQRVANIVAQTPGGIGLYYWEPAWVQNAALGSSCADNLMVDWSTRQARTSLSVFATI.

A signal peptide spans 1 to 21 (MLGKTVLLPLLVLLCHSLASA). N-linked (GlcNAc...) asparagine glycosylation is present at Asn-133. Glu-157 (proton donor) is an active-site residue. The active-site Nucleophile is the Glu-268.

Belongs to the glycosyl hydrolase 53 family.

The protein localises to the secreted. The catalysed reaction is The enzyme specifically hydrolyzes (1-&gt;4)-beta-D-galactosidic linkages in type I arabinogalactans.. Functionally, endogalactanase involved in the degradation of plant cell wall polysaccharides, and more particularly of hairy regions of pectin. In Aspergillus fumigatus (strain CBS 144.89 / FGSC A1163 / CEA10) (Neosartorya fumigata), this protein is Probable arabinogalactan endo-beta-1,4-galactanase A (galA).